We begin with the raw amino-acid sequence, 769 residues long: Protein lethal(2)denticleless (769 aa).

WD repeat units lie at residues 99–129, 143–174, 194–249, 264–303, 320–349, and 362–393; these read CHFN…RLWE, GHTR…LIWD, GHTG…KVWD, RHKL…YCYN, NSTF…YIWN, and GHTV…KIWR. The tract at residues 196-221 is disordered; sequence TGGPGTPVSQRKQRTRTPKMAGGTTS. Residue Thr201 is modified to Phosphothreonine. Residue Ser204 is modified to Phosphoserine. 3 disordered regions span residues 448 to 467, 476 to 562, and 655 to 769; these read RLMD…TTKR, AGQE…HVYT, and SPRL…VGSD. Thr456 is modified (phosphothreonine). Ser459 is modified (phosphoserine). Residues 503 to 518 are compositionally biased toward polar residues; the sequence is PSSQETACRHIQLQSI. Ser524 bears the Phosphoserine mark. A compositionally biased stretch (basic and acidic residues) spans 524 to 533; that stretch reads SPSKRQKENS. Residues 546 to 562 show a composition bias toward polar residues; the sequence is STPSHSPLSENVNHVYT. Phosphoserine is present on Ser655. Positions 657–666 are enriched in polar residues; the sequence is RLQSLRQSEC. Phosphoserine occurs at positions 679, 691, and 711. The span at 689–704 shows a compositional bias: low complexity; the sequence is AGSSSHSHSQSQPKTP. A compositionally biased stretch (polar residues) spans 705 to 714; the sequence is TSSRRNSETT. Residues 728-743 are compositionally biased toward low complexity; the sequence is PAEETTTTNAAPSSSD. Over residues 758 to 769 the composition is skewed to polar residues; the sequence is SMRTPTTAVGSD.

This sequence belongs to the WD repeat cdt2 family. Component of the DCX(DTL) E3 ubiquitin ligase complex, at least composed of Cul-4, pic/DDB1, l(2)dtl/CDT2 and Roc1a. In terms of tissue distribution, ubiquitously expressed during embryogenesis with no sign of tissue specificity in expression up to stage 17.

It is found in the cytoplasm. It functions in the pathway protein modification; protein ubiquitination. Its function is as follows. Substrate-specific adapter of a DCX (DDB1-CUL4-X-box) E3 ubiquitin-protein ligase complex required for cell cycle control. The DCX(DTL) complex, also named CRL4(CDT2) complex, mediates the polyubiquitination and subsequent degradation of E2f during S phase. E2f degradation is necessary to ensure proper development. Substrates require their interaction with PCNA for their polyubiquitination: substrates interact with PCNA via their PIP-box, leading to recruit the DCX(DTL) complex. The sequence is that of Protein lethal(2)denticleless (l(2)dtl) from Drosophila melanogaster (Fruit fly).